A 205-amino-acid chain; its full sequence is Methylthioribulose-1-phosphate dehydratase (205 aa).

Zn(2+) is bound by residues His-96 and His-98.

The protein belongs to the aldolase class II family. MtnB subfamily. Requires Zn(2+) as cofactor.

It carries out the reaction 5-(methylsulfanyl)-D-ribulose 1-phosphate = 5-methylsulfanyl-2,3-dioxopentyl phosphate + H2O. It functions in the pathway amino-acid biosynthesis; L-methionine biosynthesis via salvage pathway; L-methionine from S-methyl-5-thio-alpha-D-ribose 1-phosphate: step 2/6. In terms of biological role, catalyzes the dehydration of methylthioribulose-1-phosphate (MTRu-1-P) into 2,3-diketo-5-methylthiopentyl-1-phosphate (DK-MTP-1-P). The polypeptide is Methylthioribulose-1-phosphate dehydratase (Pseudomonas aeruginosa (strain UCBPP-PA14)).